The following is a 683-amino-acid chain: Probable metal-nicotianamine transporter YSL3 (683 aa).

Helical transmembrane passes span 29–49, 58–78, 97–117, 142–162, 204–224, 265–285, 309–329, 372–392, 404–424, 448–468, 490–510, 553–573, 595–615, and 628–648; these read LVTPRAMAVAVVLSVVICFVG, IVPALNMPASILSFFLLKWLI, MFLLTCIITCLNLALTSGFAT, HVPIGKWIVYLFLVGMTGVLI, VATIFKVFFGSFSWSMFQWFY, IVNFGLFFGAIISWGFLYPFL, VFISVTLIITDGMINFLTLIT, IPIPVPVAAYITCAAISTIAI, LAVLYMVIPVVTFCNTYATGL, PGAVVASLLASGVIVAALHIS, TGQIFGVAVGSILCPCVFLAF, CMTFCVVAFCVTVIIDAVVLV, FFAGSYFTIDMCVGSLLLLAW, and SAVAAGLICGEGLFTLPSALL.

The protein belongs to the YSL (TC 2.A.67.2) family.

The protein localises to the membrane. Functionally, may be involved in the transport of nicotianamine-chelated metals. In Oryza sativa subsp. japonica (Rice), this protein is Probable metal-nicotianamine transporter YSL3 (YSL3).